The primary structure comprises 268 residues: Shikimate kinase (268 aa).

Residue 70–80 (PSGYGLKSSSA) coordinates ATP.

It belongs to the GHMP kinase family. Archaeal shikimate kinase subfamily.

The protein resides in the cytoplasm. It carries out the reaction shikimate + ATP = 3-phosphoshikimate + ADP + H(+). It functions in the pathway metabolic intermediate biosynthesis; chorismate biosynthesis; chorismate from D-erythrose 4-phosphate and phosphoenolpyruvate: step 5/7. The protein is Shikimate kinase (aroK) of Thermoplasma acidophilum (strain ATCC 25905 / DSM 1728 / JCM 9062 / NBRC 15155 / AMRC-C165).